A 129-amino-acid chain; its full sequence is Large ribosomal subunit protein bL19 (129 aa).

This sequence belongs to the bacterial ribosomal protein bL19 family.

This protein is located at the 30S-50S ribosomal subunit interface and may play a role in the structure and function of the aminoacyl-tRNA binding site. This Rhizorhabdus wittichii (strain DSM 6014 / CCUG 31198 / JCM 15750 / NBRC 105917 / EY 4224 / RW1) (Sphingomonas wittichii) protein is Large ribosomal subunit protein bL19.